A 424-amino-acid chain; its full sequence is 5-methylthioadenosine/S-adenosylhomocysteine deaminase (424 aa).

His60 and His62 together coordinate Zn(2+). Substrate contacts are provided by Glu89 and His181. His208 contacts Zn(2+). Residues Glu211 and Asp296 each contribute to the substrate site. Residue Asp296 coordinates Zn(2+).

Belongs to the metallo-dependent hydrolases superfamily. MTA/SAH deaminase family. The cofactor is Zn(2+).

The enzyme catalyses S-adenosyl-L-homocysteine + H2O + H(+) = S-inosyl-L-homocysteine + NH4(+). It catalyses the reaction S-methyl-5'-thioadenosine + H2O + H(+) = S-methyl-5'-thioinosine + NH4(+). Catalyzes the deamination of 5-methylthioadenosine and S-adenosyl-L-homocysteine into 5-methylthioinosine and S-inosyl-L-homocysteine, respectively. Is also able to deaminate adenosine. The polypeptide is 5-methylthioadenosine/S-adenosylhomocysteine deaminase (Thermococcus kodakarensis (strain ATCC BAA-918 / JCM 12380 / KOD1) (Pyrococcus kodakaraensis (strain KOD1))).